Here is a 788-residue protein sequence, read N- to C-terminus: 5-methyltetrahydropteroyltriglutamate--homocysteine methyltransferase (788 aa).

5-methyltetrahydropteroyltri-L-glutamate-binding positions include 24–27 (RELK) and K140. L-homocysteine-binding positions include 463–465 (IGS) and E516. Residues 463–465 (IGS) and E516 contribute to the L-methionine site. 5-methyltetrahydropteroyltri-L-glutamate-binding positions include 547–548 (RC) and W593. D631 contributes to the L-homocysteine binding site. L-methionine is bound at residue D631. A 5-methyltetrahydropteroyltri-L-glutamate-binding site is contributed by E637. H673, C675, and E697 together coordinate Zn(2+). The active-site Proton donor is the H726. C758 lines the Zn(2+) pocket.

The protein belongs to the vitamin-B12 independent methionine synthase family. Requires Zn(2+) as cofactor.

The catalysed reaction is 5-methyltetrahydropteroyltri-L-glutamate + L-homocysteine = tetrahydropteroyltri-L-glutamate + L-methionine. It functions in the pathway amino-acid biosynthesis; L-methionine biosynthesis via de novo pathway; L-methionine from L-homocysteine (MetE route): step 1/1. Functionally, catalyzes the transfer of a methyl group from 5-methyltetrahydrofolate to homocysteine resulting in methionine formation. The chain is 5-methyltetrahydropteroyltriglutamate--homocysteine methyltransferase from Rhodopseudomonas palustris (strain ATCC BAA-98 / CGA009).